Here is a 313-residue protein sequence, read N- to C-terminus: Ribosomal RNA small subunit methyltransferase H (313 aa).

Residues 37–39 (GGH), Asp57, Phe83, Asp104, and Gln111 contribute to the S-adenosyl-L-methionine site.

Belongs to the methyltransferase superfamily. RsmH family.

Its subcellular location is the cytoplasm. The enzyme catalyses cytidine(1402) in 16S rRNA + S-adenosyl-L-methionine = N(4)-methylcytidine(1402) in 16S rRNA + S-adenosyl-L-homocysteine + H(+). In terms of biological role, specifically methylates the N4 position of cytidine in position 1402 (C1402) of 16S rRNA. The chain is Ribosomal RNA small subunit methyltransferase H from Mycoplasmoides gallisepticum (strain R(low / passage 15 / clone 2)) (Mycoplasma gallisepticum).